The sequence spans 611 residues: Dihydroxy-acid dehydratase (611 aa).

Asp-81 provides a ligand contact to Mg(2+). Cys-122 provides a ligand contact to [2Fe-2S] cluster. Mg(2+) is bound by residues Asp-123 and Lys-124. The residue at position 124 (Lys-124) is an N6-carboxylysine. Cys-195 lines the [2Fe-2S] cluster pocket. Glu-491 lines the Mg(2+) pocket. Residue Ser-517 is the Proton acceptor of the active site.

This sequence belongs to the IlvD/Edd family. In terms of assembly, homodimer. The cofactor is [2Fe-2S] cluster. Mg(2+) serves as cofactor.

The enzyme catalyses (2R)-2,3-dihydroxy-3-methylbutanoate = 3-methyl-2-oxobutanoate + H2O. It catalyses the reaction (2R,3R)-2,3-dihydroxy-3-methylpentanoate = (S)-3-methyl-2-oxopentanoate + H2O. It participates in amino-acid biosynthesis; L-isoleucine biosynthesis; L-isoleucine from 2-oxobutanoate: step 3/4. The protein operates within amino-acid biosynthesis; L-valine biosynthesis; L-valine from pyruvate: step 3/4. In terms of biological role, functions in the biosynthesis of branched-chain amino acids. Catalyzes the dehydration of (2R,3R)-2,3-dihydroxy-3-methylpentanoate (2,3-dihydroxy-3-methylvalerate) into 2-oxo-3-methylpentanoate (2-oxo-3-methylvalerate) and of (2R)-2,3-dihydroxy-3-methylbutanoate (2,3-dihydroxyisovalerate) into 2-oxo-3-methylbutanoate (2-oxoisovalerate), the penultimate precursor to L-isoleucine and L-valine, respectively. In Histophilus somni (strain 2336) (Haemophilus somnus), this protein is Dihydroxy-acid dehydratase.